Reading from the N-terminus, the 611-residue chain is E-selectin (611 aa).

Residues 1–22 (MITSQLLPALTLVLLLFKEGGA) form the signal peptide. One can recognise a C-type lectin domain in the interval 23–140 (WSYNASTEAM…CDKKKLALCY (118 aa)). The Extracellular segment spans residues 23–557 (WSYNASTEAM…CEAPTESSIP (535 aa)). Asn26 carries N-linked (GlcNAc...) asparagine glycosylation. Cystine bridges form between Cys41-Cys139, Cys112-Cys131, Cys144-Cys155, Cys149-Cys164, Cys166-Cys175, Cys181-Cys225, Cys194-Cys207, Cys211-Cys238, Cys243-Cys287, Cys256-Cys269, Cys273-Cys300, Cys305-Cys350, Cys336-Cys363, Cys368-Cys413, Cys399-Cys426, Cys431-Cys476, Cys462-Cys489, Cys494-Cys535, and Cys521-Cys548. Ca(2+) is bound by residues Glu102, Asn104, and Glu110. Residues 102–110 (EPNNKQNDE), 114–119 (EIYIKR), and 127–129 (NDE) contribute to the a carbohydrate site. Asn127 and Asp128 together coordinate Ca(2+). Residues 141–176 (TAACTPTSCSGHGECVETVNNYTCKCHPGFRGLRCE) enclose the EGF-like domain. The N-linked (GlcNAc...) asparagine glycan is linked to Asn161. 2 consecutive Sushi domains span residues 179-240 (VTCQ…ACNV) and 241-302 (VECS…TCKA). Residue Asn204 is glycosylated (N-linked (GlcNAc...) asparagine). Residue Asn266 is glycosylated (N-linked (GlcNAc...) asparagine). 2 N-linked (GlcNAc...) asparagine glycosylation sites follow: Asn313 and Asn333. Sushi domains lie at 316-365 (VSCS…VCKA), 367-428 (QCKA…TCEA), 430-491 (KCDA…SCQV), and 492-550 (VQCF…TCEA). Asn528 carries N-linked (GlcNAc...) asparagine glycosylation. A helical membrane pass occupies residues 558 to 579 (LAVGLTAGGTSLLTVASFLLWL). The Cytoplasmic segment spans residues 580-611 (LKRLRKRAKKFVPASSCQSLQSDGSYHMPCSI).

It belongs to the selectin/LECAM family. In terms of assembly, interacts with SELPLG/PSGL1 and PODXL2 through the sialyl Lewis X epitope. SELPLG sulfation appears not to be required for this interaction.

It localises to the cell membrane. Cell-surface glycoprotein having a role in immunoadhesion. Mediates in the adhesion of blood neutrophils in cytokine-activated endothelium through interaction with SELPLG/PSGL1. May have a role in capillary morphogenesis. In Canis lupus familiaris (Dog), this protein is E-selectin (SELE).